The primary structure comprises 112 residues: Large ribosomal subunit protein eL30 (112 aa).

It belongs to the eukaryotic ribosomal protein eL30 family.

The sequence is that of Large ribosomal subunit protein eL30 (RPL30) from Lupinus luteus (European yellow lupine).